The sequence spans 126 residues: Large ribosomal subunit protein bL12 (126 aa).

Positions 36–55 are enriched in low complexity; sequence APAPAAAPAAGGDQGGAEAA. A disordered region spans residues 36–57; it reads APAPAAAPAAGGDQGGAEAAEQ.

The protein belongs to the bacterial ribosomal protein bL12 family. In terms of assembly, homodimer. Part of the ribosomal stalk of the 50S ribosomal subunit. Forms a multimeric L10(L12)X complex, where L10 forms an elongated spine to which 2 to 4 L12 dimers bind in a sequential fashion. Binds GTP-bound translation factors.

Forms part of the ribosomal stalk which helps the ribosome interact with GTP-bound translation factors. Is thus essential for accurate translation. This is Large ribosomal subunit protein bL12 from Natranaerobius thermophilus (strain ATCC BAA-1301 / DSM 18059 / JW/NM-WN-LF).